A 384-amino-acid chain; its full sequence is Helix-loop-helix protein delilah (384 aa).

Disordered regions lie at residues 1-101 (MKSN…TANA) and 187-227 (EEAE…KIVP). Basic residues predominate over residues 75–86 (KSRKNAPTKSKT). Residues 94–153 (YRRKTANARERTRMREINTAFETLRHCVPEAIKGEDAANTNEKLTKITTLRLAMKYITML) form the bHLH domain. Residues 209–224 (KKSSAASKRQSQKQAK) show a composition bias toward low complexity.

In terms of assembly, efficient DNA binding requires dimerization with another bHLH protein, possibly with da. Expressed almost exclusively in the attachments sites of the somatic muscles to tendon cells in the epidermis.

Its subcellular location is the nucleus. Probably plays an important role in the differentiation of epidermal cells into the tendon cells that form the attachment sites for all muscles. This Drosophila melanogaster (Fruit fly) protein is Helix-loop-helix protein delilah (tx).